The chain runs to 1192 residues: Probable ATP-binding protein BrxC (1192 aa).

Belongs to the BrxC family.

BREX systems (bacteriophage exclusion) provide immunity against bacteriophage. A core protein of a type 1 BREX system. This system allows phage adsorption but prevents phage DNA replication, without degradation of the phage DNA. Methylation of bacterial DNA by PglX probably guides self/non-self discrimination. When the brxA-brxB-brxC-pglX and pglZ-brxL operons are transformed into a susceptible B.subtilis strain (BEST7003) they confer resistance to bacteriophages SPbeta, SP16, Zeta, phi3T and SP02 and partial protection to phages SP01 and SP82G (these include lytic and temperate phage). They do not protect against phages phi105, rho10 or rho14. Additionally confers a very slight reduction in efficiency of plasmid transformation. The protein is Probable ATP-binding protein BrxC of Bacillus cereus (strain H3081.97).